Reading from the N-terminus, the 329-residue chain is Beta-ketoacyl-[acyl-carrier-protein] synthase III (329 aa).

Active-site residues include Cys-113 and His-255. The tract at residues 256-260 (QANQR) is ACP-binding. Asn-285 is a catalytic residue.

The protein belongs to the thiolase-like superfamily. FabH family. Homodimer.

The protein resides in the cytoplasm. It carries out the reaction malonyl-[ACP] + acetyl-CoA + H(+) = 3-oxobutanoyl-[ACP] + CO2 + CoA. The protein operates within lipid metabolism; fatty acid biosynthesis. Functionally, catalyzes the condensation reaction of fatty acid synthesis by the addition to an acyl acceptor of two carbons from malonyl-ACP. Catalyzes the first condensation reaction which initiates fatty acid synthesis and may therefore play a role in governing the total rate of fatty acid production. Possesses both acetoacetyl-ACP synthase and acetyl transacylase activities. Its substrate specificity determines the biosynthesis of branched-chain and/or straight-chain of fatty acids. In Chlorobium phaeovibrioides (strain DSM 265 / 1930) (Prosthecochloris vibrioformis (strain DSM 265)), this protein is Beta-ketoacyl-[acyl-carrier-protein] synthase III.